We begin with the raw amino-acid sequence, 163 residues long: NADH-quinone oxidoreductase subunit I (163 aa).

4Fe-4S ferredoxin-type domains are found at residues 53 to 83 and 94 to 123; these read LRRY…IEAG and TLYE…ETRE. Positions 63, 66, 69, 73, 103, 106, 109, and 113 each coordinate [4Fe-4S] cluster.

This sequence belongs to the complex I 23 kDa subunit family. NDH-1 is composed of 14 different subunits. Subunits NuoA, H, J, K, L, M, N constitute the membrane sector of the complex. Requires [4Fe-4S] cluster as cofactor.

It is found in the cell inner membrane. It catalyses the reaction a quinone + NADH + 5 H(+)(in) = a quinol + NAD(+) + 4 H(+)(out). In terms of biological role, NDH-1 shuttles electrons from NADH, via FMN and iron-sulfur (Fe-S) centers, to quinones in the respiratory chain. The immediate electron acceptor for the enzyme in this species is believed to be ubiquinone. Couples the redox reaction to proton translocation (for every two electrons transferred, four hydrogen ions are translocated across the cytoplasmic membrane), and thus conserves the redox energy in a proton gradient. This chain is NADH-quinone oxidoreductase subunit I, found in Alkalilimnicola ehrlichii (strain ATCC BAA-1101 / DSM 17681 / MLHE-1).